We begin with the raw amino-acid sequence, 87 residues long: MWLKTQLFVLAIAVIALLEVHAEPESNDNNELVVEEARGCADAYKSCNHPRTCCDGYNGYKRACICSGSNCKCKKSLREMAAAAFGR.

An N-terminal signal peptide occupies residues 1-22 (MWLKTQLFVLAIAVIALLEVHA). A propeptide spanning residues 23 to 37 (EPESNDNNELVVEEA) is cleaved from the precursor. Cystine bridges form between cysteine 40–cysteine 54, cysteine 47–cysteine 64, cysteine 53–cysteine 73, and cysteine 66–cysteine 71. A propeptide spanning residues 75 to 87 (KSLREMAAAAFGR) is cleaved from the precursor.

The protein belongs to the neurotoxin 02 (plectoxin) family. 01 (Tx3) subfamily. In terms of tissue distribution, expressed by the venom gland.

Its subcellular location is the secreted. Functionally, antagonist of L-type calcium channels (Cav1/CACNA1). The chain is U9-ctenitoxin-Pn1a from Phoneutria nigriventer (Brazilian armed spider).